Consider the following 268-residue polypeptide: Phosphate import ATP-binding protein PstB 2 (268 aa).

An ABC transporter domain is found at 19 to 263 (YKVRNMAFFY…PKDKRTEDYI (245 aa)). Position 51-58 (51-58 (GPSGCGKS)) interacts with ATP.

Belongs to the ABC transporter superfamily. Phosphate importer (TC 3.A.1.7) family. As to quaternary structure, the complex is composed of two ATP-binding proteins (PstB), two transmembrane proteins (PstC and PstA) and a solute-binding protein (PstS).

The protein resides in the cell inner membrane. It catalyses the reaction phosphate(out) + ATP + H2O = ADP + 2 phosphate(in) + H(+). In terms of biological role, part of the ABC transporter complex PstSACB involved in phosphate import. Responsible for energy coupling to the transport system. In Gloeobacter violaceus (strain ATCC 29082 / PCC 7421), this protein is Phosphate import ATP-binding protein PstB 2.